We begin with the raw amino-acid sequence, 65 residues long: Large ribosomal subunit protein uL29 (65 aa).

Belongs to the universal ribosomal protein uL29 family.

In Leptothrix cholodnii (strain ATCC 51168 / LMG 8142 / SP-6) (Leptothrix discophora (strain SP-6)), this protein is Large ribosomal subunit protein uL29.